Consider the following 194-residue polypeptide: Ribosome maturation factor RimM (194 aa).

Residues 92–190 (DDGYYDHELI…ALVVTPPEGL (99 aa)) enclose the PRC barrel domain.

This sequence belongs to the RimM family. As to quaternary structure, binds ribosomal protein uS19.

It localises to the cytoplasm. An accessory protein needed during the final step in the assembly of 30S ribosomal subunit, possibly for assembly of the head region. Essential for efficient processing of 16S rRNA. May be needed both before and after RbfA during the maturation of 16S rRNA. It has affinity for free ribosomal 30S subunits but not for 70S ribosomes. The chain is Ribosome maturation factor RimM from Corynebacterium urealyticum (strain ATCC 43042 / DSM 7109).